The following is a 502-amino-acid chain: ATP synthase subunit alpha (502 aa).

A disordered region spans residues 115–134 (IDGQGPINTTKTRPVEQKAT). 169–176 (GDRQTGKT) lines the ATP pocket.

Belongs to the ATPase alpha/beta chains family. As to quaternary structure, F-type ATPases have 2 components, CF(1) - the catalytic core - and CF(0) - the membrane proton channel. CF(1) has five subunits: alpha(3), beta(3), gamma(1), delta(1), epsilon(1). CF(0) has three main subunits: a(1), b(2) and c(9-12). The alpha and beta chains form an alternating ring which encloses part of the gamma chain. CF(1) is attached to CF(0) by a central stalk formed by the gamma and epsilon chains, while a peripheral stalk is formed by the delta and b chains.

The protein resides in the cell membrane. The enzyme catalyses ATP + H2O + 4 H(+)(in) = ADP + phosphate + 5 H(+)(out). Produces ATP from ADP in the presence of a proton gradient across the membrane. The alpha chain is a regulatory subunit. This is ATP synthase subunit alpha from Staphylococcus haemolyticus (strain JCSC1435).